Reading from the N-terminus, the 96-residue chain is Large ribosomal subunit protein uL23 (96 aa).

This sequence belongs to the universal ribosomal protein uL23 family. As to quaternary structure, part of the 50S ribosomal subunit. Contacts protein L29, and trigger factor when it is bound to the ribosome.

One of the early assembly proteins it binds 23S rRNA. One of the proteins that surrounds the polypeptide exit tunnel on the outside of the ribosome. Forms the main docking site for trigger factor binding to the ribosome. The chain is Large ribosomal subunit protein uL23 from Caldanaerobacter subterraneus subsp. tengcongensis (strain DSM 15242 / JCM 11007 / NBRC 100824 / MB4) (Thermoanaerobacter tengcongensis).